The sequence spans 609 residues: Phosphoenolpyruvate carboxykinase [GTP] (609 aa).

Residues Arg-81 and 220–222 contribute to the substrate site; that span reads YGG. Mn(2+)-binding residues include Lys-229 and His-249. A substrate-binding site is contributed by Ser-271. 272–277 lines the GTP pocket; that stretch reads ACGKTN. Cys-273 is a catalytic residue. Asp-296 contacts Mn(2+). 387-389 contributes to the substrate binding site; the sequence is NSR. Residues Arg-389, Arg-420, and 515–518 contribute to the GTP site; that span reads FGEN.

This sequence belongs to the phosphoenolpyruvate carboxykinase [GTP] family. As to quaternary structure, monomer. The cofactor is Mn(2+).

Its subcellular location is the cytoplasm. It carries out the reaction oxaloacetate + GTP = phosphoenolpyruvate + GDP + CO2. It participates in carbohydrate biosynthesis; gluconeogenesis. Catalyzes the conversion of oxaloacetate (OAA) to phosphoenolpyruvate (PEP), the rate-limiting step in the metabolic pathway that produces glucose from lactate and other precursors derived from the citric acid cycle. In Mycobacterium ulcerans (strain Agy99), this protein is Phosphoenolpyruvate carboxykinase [GTP].